Here is a 348-residue protein sequence, read N- to C-terminus: Serpentine receptor class beta-7 (348 aa).

7 helical membrane-spanning segments follow: residues 31-51, 63-83, 107-127, 145-165, 191-211, 241-261, and 280-300; these read QLIMLFSSLFPLTYFILFQLL, LVGYFGAILVFSVVFLVEAFI, GNLLGCLLMTIPTFFPISITF, FLGPILAIFLVLLDLFLILLI, MFFIMMLILNSFNFFFSFLLL, ISVIFVHVTFFGSYTTITILL, and GAFMTMISSYNFAVGVASVYF.

It belongs to the nematode receptor-like protein srb family.

It is found in the membrane. The polypeptide is Serpentine receptor class beta-7 (srb-7) (Caenorhabditis elegans).